The primary structure comprises 653 residues: ATP-dependent zinc metalloprotease FtsH 1 (653 aa).

Residues 1-8 (MAENKWLR) are Cytoplasmic-facing. The chain crosses the membrane as a helical span at residues 9–29 (NGFVWIVLIIAVVALWVTFMK). The Extracellular portion of the chain corresponds to 30–110 (DGGSAREENF…RVNPASQWGN (81 aa)). Residues 111-131 (WLSALTFILPTLFLIGIVIFM) traverse the membrane as a helical segment. At 132-653 (MRQAQGTNNQ…SPTMRPQPAS (522 aa)) the chain is on the cytoplasmic side. 203–210 (GPPGTGKT) contacts ATP. His425 contacts Zn(2+). The active site involves Glu426. Positions 429 and 501 each coordinate Zn(2+). Residues 604-653 (EPRPRPQLVGPPVTRPAALAHKTEEADRGGERSPHPQPHPSPTMRPQPAS) form a disordered region. The span at 624–637 (HKTEEADRGGERSP) shows a compositional bias: basic and acidic residues. Pro residues predominate over residues 638–653 (HPQPHPSPTMRPQPAS).

It in the central section; belongs to the AAA ATPase family. The protein in the C-terminal section; belongs to the peptidase M41 family. As to quaternary structure, homohexamer. Requires Zn(2+) as cofactor.

It is found in the cell membrane. Functionally, acts as a processive, ATP-dependent zinc metallopeptidase for both cytoplasmic and membrane proteins. Plays a role in the quality control of integral membrane proteins. The protein is ATP-dependent zinc metalloprotease FtsH 1 of Sphaerobacter thermophilus (strain ATCC 49802 / DSM 20745 / KCCM 41009 / NCIMB 13125 / S 6022).